The following is a 213-amino-acid chain: Octanoyltransferase (213 aa).

Residues 27–209 (AATPDEVWLC…RLLAAMPEPA (183 aa)) enclose the BPL/LPL catalytic domain. Substrate-binding positions include 66-73 (RGGQVTYH), 140-142 (ALG), and 153-155 (GVA). Cys171 serves as the catalytic Acyl-thioester intermediate.

This sequence belongs to the LipB family.

The protein localises to the cytoplasm. It catalyses the reaction octanoyl-[ACP] + L-lysyl-[protein] = N(6)-octanoyl-L-lysyl-[protein] + holo-[ACP] + H(+). The protein operates within protein modification; protein lipoylation via endogenous pathway; protein N(6)-(lipoyl)lysine from octanoyl-[acyl-carrier-protein]: step 1/2. In terms of biological role, catalyzes the transfer of endogenously produced octanoic acid from octanoyl-acyl-carrier-protein onto the lipoyl domains of lipoate-dependent enzymes. Lipoyl-ACP can also act as a substrate although octanoyl-ACP is likely to be the physiological substrate. The polypeptide is Octanoyltransferase (Bordetella petrii (strain ATCC BAA-461 / DSM 12804 / CCUG 43448)).